The sequence spans 209 residues: ATP-dependent Clp protease proteolytic subunit (209 aa).

The active-site Nucleophile is the Ser106. The active site involves His131.

Belongs to the peptidase S14 family. Fourteen ClpP subunits assemble into 2 heptameric rings which stack back to back to give a disk-like structure with a central cavity, resembling the structure of eukaryotic proteasomes.

It localises to the cytoplasm. The enzyme catalyses Hydrolysis of proteins to small peptides in the presence of ATP and magnesium. alpha-casein is the usual test substrate. In the absence of ATP, only oligopeptides shorter than five residues are hydrolyzed (such as succinyl-Leu-Tyr-|-NHMec, and Leu-Tyr-Leu-|-Tyr-Trp, in which cleavage of the -Tyr-|-Leu- and -Tyr-|-Trp bonds also occurs).. Its function is as follows. Cleaves peptides in various proteins in a process that requires ATP hydrolysis. Has a chymotrypsin-like activity. Plays a major role in the degradation of misfolded proteins. In Brucella canis (strain ATCC 23365 / NCTC 10854 / RM-666), this protein is ATP-dependent Clp protease proteolytic subunit.